A 215-amino-acid polypeptide reads, in one-letter code: ATP-dependent dethiobiotin synthetase BioD (215 aa).

13-18 (DIGKTI) is an ATP binding site. Mg(2+) is bound at residue Thr-17. Lys-38 is an active-site residue. Residue Thr-42 coordinates substrate. ATP-binding positions include Asp-50, 115–118 (EGAG), and 175–176 (NH). Mg(2+)-binding residues include Asp-50 and Glu-115.

The protein belongs to the dethiobiotin synthetase family. Homodimer. Mg(2+) is required as a cofactor.

It localises to the cytoplasm. The catalysed reaction is (7R,8S)-7,8-diammoniononanoate + CO2 + ATP = (4R,5S)-dethiobiotin + ADP + phosphate + 3 H(+). The protein operates within cofactor biosynthesis; biotin biosynthesis; biotin from 7,8-diaminononanoate: step 1/2. In terms of biological role, catalyzes a mechanistically unusual reaction, the ATP-dependent insertion of CO2 between the N7 and N8 nitrogen atoms of 7,8-diaminopelargonic acid (DAPA, also called 7,8-diammoniononanoate) to form a ureido ring. This Neisseria meningitidis serogroup A / serotype 4A (strain DSM 15465 / Z2491) protein is ATP-dependent dethiobiotin synthetase BioD.